Here is a 328-residue protein sequence, read N- to C-terminus: MIEIDGSFGEGGGQILRTAVALSCVTGKAVRIRNIRANRPKPGLAAQHLKGIEAAKIISNAEVEGLRIGSTEIVFNPGSVRGGNFRVDIGTAGSVTLIFQTVLLPLLFADRDSTLTVTGGTDVAWAPPVDYFKNVTLRALREMGAECELEVLKRGYYPKGGGMVRLTVRPAEMKGVVYERIDEIVRGVSHCQNLPGHVAERQASSARNFLEERGIRAEIRTEVLKGLSTGSGIVLWSGYKGGSALGERGKRAEVVGQEAAESLYRELMSDAAFDAHLADQVMPFAAMARGRTEYTTSEVTMHQKSNAYVINTFLGKVVKFEGNKIIIK.

Residues Gln-100 and His-276–Gln-280 each bind ATP. The active-site Tele-AMP-histidine intermediate is His-302.

The protein belongs to the RNA 3'-terminal cyclase family. Type 1 subfamily.

It localises to the cytoplasm. The catalysed reaction is a 3'-end 3'-phospho-ribonucleotide-RNA + ATP = a 3'-end 2',3'-cyclophospho-ribonucleotide-RNA + AMP + diphosphate. Functionally, catalyzes the conversion of 3'-phosphate to a 2',3'-cyclic phosphodiester at the end of RNA. The mechanism of action of the enzyme occurs in 3 steps: (A) adenylation of the enzyme by ATP; (B) transfer of adenylate to an RNA-N3'P to produce RNA-N3'PP5'A; (C) and attack of the adjacent 2'-hydroxyl on the 3'-phosphorus in the diester linkage to produce the cyclic end product. The biological role of this enzyme is unknown but it is likely to function in some aspects of cellular RNA processing. The protein is RNA 3'-terminal phosphate cyclase (rtcA) of Archaeoglobus fulgidus (strain ATCC 49558 / DSM 4304 / JCM 9628 / NBRC 100126 / VC-16).